Reading from the N-terminus, the 63-residue chain is Cytochrome c oxidase subunit 7C, mitochondrial (63 aa).

A mitochondrion-targeting transit peptide spans 1–16 (MLGQSIRRFTTSVVRR). Residues 17–33 (SHYEEGPGKNLPFSVEN) are Mitochondrial matrix-facing. N6-acetyllysine; alternate is present on Lys-25. Lys-25 is modified (N6-succinyllysine; alternate). The chain crosses the membrane as a helical span at residues 34-60 (KWSLLAKMCLYFGSAFATPFLIVRHQL). Residues 61-63 (LKT) lie on the Mitochondrial intermembrane side of the membrane.

It belongs to the cytochrome c oxidase VIIc family. In terms of assembly, component of the cytochrome c oxidase (complex IV, CIV), a multisubunit enzyme composed of 14 subunits. The complex is composed of a catalytic core of 3 subunits MT-CO1, MT-CO2 and MT-CO3, encoded in the mitochondrial DNA, and 11 supernumerary subunits COX4I, COX5A, COX5B, COX6A, COX6B, COX6C, COX7A, COX7B, COX7C, COX8 and NDUFA4, which are encoded in the nuclear genome. The complex exists as a monomer or a dimer and forms supercomplexes (SCs) in the inner mitochondrial membrane with NADH-ubiquinone oxidoreductase (complex I, CI) and ubiquinol-cytochrome c oxidoreductase (cytochrome b-c1 complex, complex III, CIII), resulting in different assemblies (supercomplex SCI(1)III(2)IV(1) and megacomplex MCI(2)III(2)IV(2)). Interacts with RAB5IF.

The protein localises to the mitochondrion inner membrane. The protein operates within energy metabolism; oxidative phosphorylation. Functionally, component of the cytochrome c oxidase, the last enzyme in the mitochondrial electron transport chain which drives oxidative phosphorylation. The respiratory chain contains 3 multisubunit complexes succinate dehydrogenase (complex II, CII), ubiquinol-cytochrome c oxidoreductase (cytochrome b-c1 complex, complex III, CIII) and cytochrome c oxidase (complex IV, CIV), that cooperate to transfer electrons derived from NADH and succinate to molecular oxygen, creating an electrochemical gradient over the inner membrane that drives transmembrane transport and the ATP synthase. Cytochrome c oxidase is the component of the respiratory chain that catalyzes the reduction of oxygen to water. Electrons originating from reduced cytochrome c in the intermembrane space (IMS) are transferred via the dinuclear copper A center (CU(A)) of subunit 2 and heme A of subunit 1 to the active site in subunit 1, a binuclear center (BNC) formed by heme A3 and copper B (CU(B)). The BNC reduces molecular oxygen to 2 water molecules using 4 electrons from cytochrome c in the IMS and 4 protons from the mitochondrial matrix. In Pongo pygmaeus (Bornean orangutan), this protein is Cytochrome c oxidase subunit 7C, mitochondrial (COX7C).